Consider the following 50-residue polypeptide: Insulin-1 (50 aa).

3 disulfides stabilise this stretch: cysteine 7–cysteine 36, cysteine 19–cysteine 49, and cysteine 35–cysteine 40.

It belongs to the insulin family. In terms of assembly, heterodimer of a B chain and an A chain linked by two disulfide bonds.

Its subcellular location is the secreted. In terms of biological role, insulin decreases blood glucose concentration. It increases cell permeability to monosaccharides, amino acids and fatty acids. It accelerates glycolysis, the pentose phosphate cycle, and glycogen synthesis in liver. This Katsuwonus pelamis (Skipjack tuna) protein is Insulin-1.